Reading from the N-terminus, the 635-residue chain is DNA mismatch repair protein MutL (635 aa).

The tract at residues 359 to 399 (GTNKYAQPEAAKSSAAEQAVARERSSARERAAPAYKEDHPY) is disordered. The span at 364–377 (AQPEAAKSSAAEQA) shows a compositional bias: low complexity. Residues 378–399 (VARERSSARERAAPAYKEDHPY) are compositionally biased toward basic and acidic residues.

It belongs to the DNA mismatch repair MutL/HexB family.

Functionally, this protein is involved in the repair of mismatches in DNA. It is required for dam-dependent methyl-directed DNA mismatch repair. May act as a 'molecular matchmaker', a protein that promotes the formation of a stable complex between two or more DNA-binding proteins in an ATP-dependent manner without itself being part of a final effector complex. The chain is DNA mismatch repair protein MutL from Yersinia pseudotuberculosis serotype O:1b (strain IP 31758).